Reading from the N-terminus, the 963-residue chain is Bifunctional glutamine synthetase adenylyltransferase/adenylyl-removing enzyme (963 aa).

The interval 1–453 is adenylyl removase; that stretch reads MLTTLIPLSQ…IFNEIIGEEE (453 aa). The segment at 461 to 963 is adenylyl transferase; it reads VNEKLAEWKD…VREMWQRLLA (503 aa).

Belongs to the GlnE family. It depends on Mg(2+) as a cofactor.

It carries out the reaction [glutamine synthetase]-O(4)-(5'-adenylyl)-L-tyrosine + phosphate = [glutamine synthetase]-L-tyrosine + ADP. The catalysed reaction is [glutamine synthetase]-L-tyrosine + ATP = [glutamine synthetase]-O(4)-(5'-adenylyl)-L-tyrosine + diphosphate. Its function is as follows. Involved in the regulation of glutamine synthetase GlnA, a key enzyme in the process to assimilate ammonia. When cellular nitrogen levels are high, the C-terminal adenylyl transferase (AT) inactivates GlnA by covalent transfer of an adenylyl group from ATP to specific tyrosine residue of GlnA, thus reducing its activity. Conversely, when nitrogen levels are low, the N-terminal adenylyl removase (AR) activates GlnA by removing the adenylyl group by phosphorolysis, increasing its activity. The regulatory region of GlnE binds the signal transduction protein PII (GlnB) which indicates the nitrogen status of the cell. This is Bifunctional glutamine synthetase adenylyltransferase/adenylyl-removing enzyme from Mannheimia haemolytica (Pasteurella haemolytica).